A 106-amino-acid chain; its full sequence is Cytochrome c (106 aa).

Heme c is bound by residues cysteine 17, cysteine 20, and histidine 21. At lysine 75 the chain carries N6,N6,N6-trimethyllysine. Methionine 83 contacts heme c.

This sequence belongs to the cytochrome c family. Post-translationally, binds 1 heme c group covalently per subunit.

Its subcellular location is the mitochondrion intermembrane space. Functionally, electron carrier protein. The oxidized form of the cytochrome c heme group can accept an electron from the heme group of the cytochrome c1 subunit of cytochrome reductase. Cytochrome c then transfers this electron to the cytochrome oxidase complex, the final protein carrier in the mitochondrial electron-transport chain. The chain is Cytochrome c (CYC1) from Gibberella zeae (strain ATCC MYA-4620 / CBS 123657 / FGSC 9075 / NRRL 31084 / PH-1) (Wheat head blight fungus).